Consider the following 258-residue polypeptide: Imidazole glycerol phosphate synthase subunit HisF (258 aa).

Active-site residues include D11 and D130.

The protein belongs to the HisA/HisF family. In terms of assembly, heterodimer of HisH and HisF.

The protein resides in the cytoplasm. It carries out the reaction 5-[(5-phospho-1-deoxy-D-ribulos-1-ylimino)methylamino]-1-(5-phospho-beta-D-ribosyl)imidazole-4-carboxamide + L-glutamine = D-erythro-1-(imidazol-4-yl)glycerol 3-phosphate + 5-amino-1-(5-phospho-beta-D-ribosyl)imidazole-4-carboxamide + L-glutamate + H(+). The protein operates within amino-acid biosynthesis; L-histidine biosynthesis; L-histidine from 5-phospho-alpha-D-ribose 1-diphosphate: step 5/9. IGPS catalyzes the conversion of PRFAR and glutamine to IGP, AICAR and glutamate. The HisF subunit catalyzes the cyclization activity that produces IGP and AICAR from PRFAR using the ammonia provided by the HisH subunit. In Xanthobacter autotrophicus (strain ATCC BAA-1158 / Py2), this protein is Imidazole glycerol phosphate synthase subunit HisF.